A 696-amino-acid chain; its full sequence is Putative cyclic nucleotide-gated ion channel 13 (696 aa).

At M1 to K81 the chain is on the cytoplasmic side. A disordered region spans residues K45–Q65. A helical membrane pass occupies residues I82 to I102. Topologically, residues V103–L116 are extracellular. A helical transmembrane segment spans residues E117 to F137. At Q138–S170 the chain is on the cytoplasmic side. A helical transmembrane segment spans residues Y171–I191. At P192 to D204 the chain is on the extracellular side. A helical transmembrane segment spans residues Y205–Y225. The Cytoplasmic portion of the chain corresponds to T226 to A243. A helical transmembrane segment spans residues A244–I264. The Extracellular portion of the chain corresponds to S265–V367. The chain crosses the membrane as a helical span at residues G368–I388. Residues G389 to P696 lie on the Cytoplasmic side of the membrane. Residues L474–L598 and E545 contribute to the a nucleoside 3',5'-cyclic phosphate site. Positions F590–Y605 are calmodulin-binding. Positions R610–R639 constitute an IQ domain. The disordered stretch occupies residues N677–P696.

This sequence belongs to the cyclic nucleotide-gated cation channel (TC 1.A.1.5) family. As to quaternary structure, homotetramer or heterotetramer.

The protein localises to the cell membrane. In terms of biological role, putative cyclic nucleotide-gated ion channel. In Arabidopsis thaliana (Mouse-ear cress), this protein is Putative cyclic nucleotide-gated ion channel 13 (CNGC13).